The chain runs to 415 residues: MTEQSAHEKYEFKKKLEGLRDKKGRSTELISLYIPPDKQIFDVTNQLKDEHGQAANIKSKLTRTNVQGAIESLLSRLRYLDKVPENGIVYFTGAVDIGANKTSMESEVIVPPDPITVYKYHCDSSFYLEPLEDMLKDKNTYGLLVLDRREATIGLLVGKRIQPFRNLTSTVPGKQRKGGQSAHRFQQLRLIAIHDFYKRIGDAASEVFMAVDHKDLKGVLIGGPSPTKEEFHAGEFLHHELMKKILGLFDTAYTDESGLSELVNAAGEKLQDLELMGQKNAVRDFFKELIADSGKVAYGESQVRANLEINSVDVLLLSEDLRAERVTTKCSVCGYENKWTRRWKPGEPAPAAGNCPKCGSSLEVTDVTDIVDEFSELADKSNAKVVFVSTDFDEGSQLMNAFGGIAAILRYNTGV.

This sequence belongs to the eukaryotic release factor 1 family. Heterodimer of two subunits, one of which binds GTP.

It localises to the cytoplasm. In terms of biological role, directs the termination of nascent peptide synthesis (translation) in response to the termination codons UAA, UAG and UGA. This Methanosarcina mazei (strain ATCC BAA-159 / DSM 3647 / Goe1 / Go1 / JCM 11833 / OCM 88) (Methanosarcina frisia) protein is Peptide chain release factor subunit 1.